A 747-amino-acid chain; its full sequence is Oxysterol-binding protein-related protein 11 (747 aa).

N-acetylmethionine is present on methionine 1. The disordered stretch occupies residues 1 to 50 (MQGGEPVSTMKVSESEGKLEGQATAVTPNKNSSCGGGISSSSSSRGGSAK). Serine 15 carries the phosphoserine modification. Threonine 27 bears the Phosphothreonine mark. Residues 58-155 (MENVYGYLMK…WVSRLQICTQ (98 aa)) form the PH domain. At tyrosine 62 the chain carries Phosphotyrosine. Residues 158–188 (TEAIGKNNPPLKSRSFSLASSSNSPISQRRP) form a disordered region. Over residues 170–184 (SRSFSLASSSNSPIS) the composition is skewed to low complexity. Serine 172, serine 174, serine 177, serine 181, serine 184, and serine 189 each carry phosphoserine. A compositionally biased stretch (basic and acidic residues) spans 689–713 (EIDKATEHKHTLEERQRTEERHRTE). Residues 689–714 (EIDKATEHKHTLEERQRTEERHRTET) form a disordered region.

It belongs to the OSBP family. As to quaternary structure, heterodimer with OSBPL9. Present at highest levels in ovary, testis, kidney, liver, stomach, brain, and adipose tissue. Strong expression (at protein level) in epithelial cells of kidney tubules, testicular tubules, caecum, and skin. Present at low levels in subcutaneous and visceral adipose tissue (at protein level).

It is found in the late endosome membrane. It localises to the golgi apparatus. Its subcellular location is the trans-Golgi network membrane. The catalysed reaction is a 1,2-diacyl-sn-glycero-3-phospho-(1D-myo-inositol 4-phosphate)(out) + a 1,2-diacyl-sn-glycero-3-phospho-L-serine(in) = a 1,2-diacyl-sn-glycero-3-phospho-(1D-myo-inositol 4-phosphate)(in) + a 1,2-diacyl-sn-glycero-3-phospho-L-serine(out). Plays a role in regulating ADIPOQ and FABP4 levels in differentiating adipocytes and is also involved in regulation of adipocyte triglyceride storage. Weakly binds 25-hydroxycholesterol. Interacts with OSBPL9 to function as lipid transfer proteins. Together they form a heterodimer that localizes at the ER-trans-Golgi membrane contact sites, and exchanges phosphatidylserine (1,2-diacyl-sn-glycero-3-phospho-L-serine, PS) for phosphatidylinositol-4-phosphate (1,2-diacyl-sn-glycero-3-phospho-(1D-myo-inositol 4-phosphate), PI(4)P) between the two organelles, a step that is critical for sphingomyelin synthesis in the Golgi complex. This is Oxysterol-binding protein-related protein 11 (OSBPL11) from Homo sapiens (Human).